Here is a 491-residue protein sequence, read N- to C-terminus: Galactose-1-phosphate uridylyltransferase 1 (491 aa).

The protein belongs to the galactose-1-phosphate uridylyltransferase type 2 family.

The protein resides in the cytoplasm. The catalysed reaction is alpha-D-galactose 1-phosphate + UDP-alpha-D-glucose = alpha-D-glucose 1-phosphate + UDP-alpha-D-galactose. It functions in the pathway carbohydrate metabolism; galactose metabolism. In Streptococcus pneumoniae serotype 4 (strain ATCC BAA-334 / TIGR4), this protein is Galactose-1-phosphate uridylyltransferase 1 (galT1).